A 253-amino-acid polypeptide reads, in one-letter code: 5'/3'-nucleotidase SurE (253 aa).

A divalent metal cation-binding residues include aspartate 8, aspartate 9, serine 39, and asparagine 92.

This sequence belongs to the SurE nucleotidase family. The cofactor is a divalent metal cation.

It localises to the cytoplasm. The enzyme catalyses a ribonucleoside 5'-phosphate + H2O = a ribonucleoside + phosphate. It carries out the reaction a ribonucleoside 3'-phosphate + H2O = a ribonucleoside + phosphate. It catalyses the reaction [phosphate](n) + H2O = [phosphate](n-1) + phosphate + H(+). Functionally, nucleotidase with a broad substrate specificity as it can dephosphorylate various ribo- and deoxyribonucleoside 5'-monophosphates and ribonucleoside 3'-monophosphates with highest affinity to 3'-AMP. Also hydrolyzes polyphosphate (exopolyphosphatase activity) with the preference for short-chain-length substrates (P20-25). Might be involved in the regulation of dNTP and NTP pools, and in the turnover of 3'-mononucleotides produced by numerous intracellular RNases (T1, T2, and F) during the degradation of various RNAs. The protein is 5'/3'-nucleotidase SurE of Escherichia coli O127:H6 (strain E2348/69 / EPEC).